The sequence spans 411 residues: Translation initiation factor 2 subunit gamma (411 aa).

In terms of domain architecture, tr-type G spans 9–203; it reads QAEVNIGMVG…AIQDFIPTPK (195 aa). Residues 18 to 25 form a G1 region; the sequence is GHVDHGKT. Mg(2+)-binding residues include Asp21, Thr25, Gly46, and Ser48. 21–26 serves as a coordination point for GTP; sequence DHGKTS. The segment at 46-50 is G2; it reads GISIR. Cys61, Cys64, Cys73, and Cys76 together coordinate Zn(2+). The tract at residues 90–93 is G3; that stretch reads DSPG. GTP-binding positions include 146–149 and 181–183; these read NKID and SAH. Positions 146–149 are G4; the sequence is NKID. Residues 181-183 form a G5 region; it reads SAH.

Belongs to the TRAFAC class translation factor GTPase superfamily. Classic translation factor GTPase family. EIF2G subfamily. As to quaternary structure, heterotrimer composed of an alpha, a beta and a gamma chain. The cofactor is Mg(2+).

The catalysed reaction is GTP + H2O = GDP + phosphate + H(+). Its function is as follows. eIF-2 functions in the early steps of protein synthesis by forming a ternary complex with GTP and initiator tRNA. The polypeptide is Translation initiation factor 2 subunit gamma (Methanocaldococcus jannaschii (strain ATCC 43067 / DSM 2661 / JAL-1 / JCM 10045 / NBRC 100440) (Methanococcus jannaschii)).